A 353-amino-acid polypeptide reads, in one-letter code: Chorismate synthase (353 aa).

Arg-48 and Arg-54 together coordinate NADP(+). FMN is bound by residues 125-127, 238-239, Gly-278, 293-297, and Arg-319; these read RSS, NA, and KPTSS.

The protein belongs to the chorismate synthase family. Homotetramer. It depends on FMNH2 as a cofactor.

The catalysed reaction is 5-O-(1-carboxyvinyl)-3-phosphoshikimate = chorismate + phosphate. The protein operates within metabolic intermediate biosynthesis; chorismate biosynthesis; chorismate from D-erythrose 4-phosphate and phosphoenolpyruvate: step 7/7. Functionally, catalyzes the anti-1,4-elimination of the C-3 phosphate and the C-6 proR hydrogen from 5-enolpyruvylshikimate-3-phosphate (EPSP) to yield chorismate, which is the branch point compound that serves as the starting substrate for the three terminal pathways of aromatic amino acid biosynthesis. This reaction introduces a second double bond into the aromatic ring system. This Buchnera aphidicola subsp. Schizaphis graminum (strain Sg) protein is Chorismate synthase.